The primary structure comprises 409 residues: Menaquinone reductase (409 aa).

FAD is bound by residues 11–15 (GAGPA), 44–47 (CGDG), arginine 101, valine 125, aspartate 288, and 300–301 (GI).

Belongs to the geranylgeranyl reductase family. FAD is required as a cofactor.

The catalysed reaction is menaquinone-9 + AH2 = beta-dihydromenaquinone-9 + A. The protein operates within quinol/quinone metabolism; menaquinone biosynthesis. Functionally, catalyzes the reduction of a single double bond in the isoprenoid tail of menaquinone (MK-9) in M.smegmatis, likely the beta-isoprene unit, forming the predominant form of menaquinone found in mycobacteria, MK-9(II-H2). In Mycolicibacterium smegmatis (strain ATCC 700084 / mc(2)155) (Mycobacterium smegmatis), this protein is Menaquinone reductase.